The primary structure comprises 209 residues: Large ribosomal subunit protein uL3 (209 aa).

Residues 127-151 (SGGPSSHGSKFHRHLGGTGQATTPA) are disordered.

It belongs to the universal ribosomal protein uL3 family. As to quaternary structure, part of the 50S ribosomal subunit. Forms a cluster with proteins L14 and L19.

One of the primary rRNA binding proteins, it binds directly near the 3'-end of the 23S rRNA, where it nucleates assembly of the 50S subunit. The polypeptide is Large ribosomal subunit protein uL3 (Borrelia duttonii (strain Ly)).